The sequence spans 290 residues: Lipoyl synthase (290 aa).

[4Fe-4S] cluster contacts are provided by C36, C41, C47, C62, C66, C69, and S275. The Radical SAM core domain occupies 48–264; it reads FSKKTATFMI…KEEALKIGFS (217 aa).

It belongs to the radical SAM superfamily. Lipoyl synthase family. [4Fe-4S] cluster is required as a cofactor.

It localises to the cytoplasm. It carries out the reaction [[Fe-S] cluster scaffold protein carrying a second [4Fe-4S](2+) cluster] + N(6)-octanoyl-L-lysyl-[protein] + 2 oxidized [2Fe-2S]-[ferredoxin] + 2 S-adenosyl-L-methionine + 4 H(+) = [[Fe-S] cluster scaffold protein] + N(6)-[(R)-dihydrolipoyl]-L-lysyl-[protein] + 4 Fe(3+) + 2 hydrogen sulfide + 2 5'-deoxyadenosine + 2 L-methionine + 2 reduced [2Fe-2S]-[ferredoxin]. It functions in the pathway protein modification; protein lipoylation via endogenous pathway; protein N(6)-(lipoyl)lysine from octanoyl-[acyl-carrier-protein]: step 2/2. In terms of biological role, catalyzes the radical-mediated insertion of two sulfur atoms into the C-6 and C-8 positions of the octanoyl moiety bound to the lipoyl domains of lipoate-dependent enzymes, thereby converting the octanoylated domains into lipoylated derivatives. The chain is Lipoyl synthase from Alkaliphilus metalliredigens (strain QYMF).